The following is a 93-amino-acid chain: UPF0358 protein BBR47_22520 (93 aa).

This sequence belongs to the UPF0358 family.

In Brevibacillus brevis (strain 47 / JCM 6285 / NBRC 100599), this protein is UPF0358 protein BBR47_22520.